A 131-amino-acid polypeptide reads, in one-letter code: Holo-[acyl-carrier-protein] synthase (131 aa).

The Mg(2+) site is built by aspartate 8 and glutamate 57.

The protein belongs to the P-Pant transferase superfamily. AcpS family. The cofactor is Mg(2+).

The protein localises to the cytoplasm. The catalysed reaction is apo-[ACP] + CoA = holo-[ACP] + adenosine 3',5'-bisphosphate + H(+). Functionally, transfers the 4'-phosphopantetheine moiety from coenzyme A to a Ser of acyl-carrier-protein. This chain is Holo-[acyl-carrier-protein] synthase, found in Desulforudis audaxviator (strain MP104C).